Consider the following 99-residue polypeptide: Acylphosphatase (99 aa).

The Acylphosphatase-like domain occupies 5–97 (VRQIVIRGRV…RPGERFSQLP (93 aa)). Active-site residues include Arg20 and Asn38.

This sequence belongs to the acylphosphatase family.

It catalyses the reaction an acyl phosphate + H2O = a carboxylate + phosphate + H(+). This chain is Acylphosphatase (acyP), found in Nitrobacter hamburgensis (strain DSM 10229 / NCIMB 13809 / X14).